Here is a 106-residue protein sequence, read N- to C-terminus: Phosphoribosyl-ATP pyrophosphatase (106 aa).

The protein belongs to the PRA-PH family.

Its subcellular location is the cytoplasm. The catalysed reaction is 1-(5-phospho-beta-D-ribosyl)-ATP + H2O = 1-(5-phospho-beta-D-ribosyl)-5'-AMP + diphosphate + H(+). The protein operates within amino-acid biosynthesis; L-histidine biosynthesis; L-histidine from 5-phospho-alpha-D-ribose 1-diphosphate: step 2/9. This Methylobacillus flagellatus (strain ATCC 51484 / DSM 6875 / VKM B-1610 / KT) protein is Phosphoribosyl-ATP pyrophosphatase.